The sequence spans 683 residues: Methionine--tRNA ligase (683 aa).

Positions 15-25 (PYANGSIHLGH) match the 'HIGH' region motif. Zn(2+) is bound by residues cysteine 146, cysteine 149, cysteine 159, and cysteine 162. Positions 332–336 (KMSKS) match the 'KMSKS' region motif. Lysine 335 is a binding site for ATP. The tRNA-binding domain occupies 582–683 (DFAKVDLRIA…QGAQAGMRVM (102 aa)).

It belongs to the class-I aminoacyl-tRNA synthetase family. MetG type 1 subfamily. Homodimer. The cofactor is Zn(2+).

It localises to the cytoplasm. The catalysed reaction is tRNA(Met) + L-methionine + ATP = L-methionyl-tRNA(Met) + AMP + diphosphate. Its function is as follows. Is required not only for elongation of protein synthesis but also for the initiation of all mRNA translation through initiator tRNA(fMet) aminoacylation. The protein is Methionine--tRNA ligase of Vibrio cholerae serotype O1 (strain ATCC 39541 / Classical Ogawa 395 / O395).